The sequence spans 37 residues: Large ribosomal subunit protein bL36c (37 aa).

It belongs to the bacterial ribosomal protein bL36 family.

Its subcellular location is the plastid. The protein localises to the chloroplast. This is Large ribosomal subunit protein bL36c from Lepidium virginicum (Virginia pepperweed).